Consider the following 379-residue polypeptide: DNA replication and repair protein RecF (379 aa).

30–37 (GKNAQGKT) contacts ATP.

Belongs to the RecF family.

The protein resides in the cytoplasm. Functionally, the RecF protein is involved in DNA metabolism; it is required for DNA replication and normal SOS inducibility. RecF binds preferentially to single-stranded, linear DNA. It also seems to bind ATP. This chain is DNA replication and repair protein RecF, found in Ligilactobacillus salivarius (strain UCC118) (Lactobacillus salivarius).